The chain runs to 280 residues: Gem-associated protein 2 (280 aa).

The segment at 1–39 (MRRAELAGLKTMAWVPAESAVEELMPRLLPVEPCDLTEG) is may play a minor inhibitory role in snRNA binding to 5Sm (SNRPD1, SNRPD2, SNRPE, SNRPF and SNRPG) during snRNP assembly by inserting into the RNA binding pocket of 5Sm. Residues Ser-81 and Ser-166 each carry the phosphoserine modification.

This sequence belongs to the gemin-2 family. As to quaternary structure, monomer. Part of the core SMN complex that contains SMN1, GEMIN2/SIP1, DDX20/GEMIN3, GEMIN4, GEMIN5, GEMIN6, GEMIN7, GEMIN8 and STRAP/UNRIP. Part of the SMN-Sm complex that contains SMN1, GEMIN2/SIP1, DDX20/GEMIN3, GEMIN4, GEMIN5, GEMIN6, GEMIN7, GEMIN8, STRAP/UNRIP and the Sm proteins SNRPB, SNRPD1, SNRPD2, SNRPD3, SNRPE, SNRPF and SNRPG. Interacts with GEMIN5; the interaction is direct. Interacts (via C-terminus) with SMN1; the interaction is direct. Interacts with SNRPD1; the interaction is direct. Interacts with SNRPD2; the interaction is direct. Interacts (via N-terminus) with SNRPF; the interaction is direct. Interacts (via N-terminus) with SNRPE; the interaction is direct. Interacts (via N-terminus) with SNRPG; the interaction is direct.

It localises to the nucleus. It is found in the gem. Its subcellular location is the cytoplasm. The SMN complex catalyzes the assembly of small nuclear ribonucleoproteins (snRNPs), the building blocks of the spliceosome, and thereby plays an important role in the splicing of cellular pre-mRNAs. Most spliceosomal snRNPs contain a common set of Sm proteins SNRPB, SNRPD1, SNRPD2, SNRPD3, SNRPE, SNRPF and SNRPG that assemble in a heptameric protein ring on the Sm site of the small nuclear RNA to form the core snRNP (Sm core). In the cytosol, the Sm proteins SNRPD1, SNRPD2, SNRPE, SNRPF and SNRPG (5Sm) are trapped in an inactive 6S pICln-Sm complex by the chaperone CLNS1A that controls the assembly of the core snRNP. To assemble core snRNPs, the SMN complex accepts the trapped 5Sm proteins from CLNS1A. Binding of snRNA inside 5Sm ultimately triggers eviction of the SMN complex, thereby allowing binding of SNRPD3 and SNRPB to complete assembly of the core snRNP. Within the SMN complex, GEMIN2 constrains the conformation of 5Sm, thereby promoting 5Sm binding to snRNA containing the snRNP code (a nonameric Sm site and a 3'-adjacent stem-loop), thus preventing progression of assembly until a cognate substrate is bound. This Homo sapiens (Human) protein is Gem-associated protein 2.